Here is a 465-residue protein sequence, read N- to C-terminus: Dihydrolipoyl dehydrogenase (465 aa).

Residues 34 to 42, lysine 51, and glycine 114 contribute to the FAD site; that span reads EEREAGGTC. The cysteines at positions 42 and 47 are disulfide-linked. NAD(+) is bound by residues 180–184, glutamate 203, valine 237, and 264–267; these read GGGVI and SIGR. Residues aspartate 307 and alanine 315 each coordinate FAD. The active-site Proton acceptor is histidine 439.

Belongs to the class-I pyridine nucleotide-disulfide oxidoreductase family. It depends on FAD as a cofactor.

Its subcellular location is the cytoplasm. The enzyme catalyses N(6)-[(R)-dihydrolipoyl]-L-lysyl-[protein] + NAD(+) = N(6)-[(R)-lipoyl]-L-lysyl-[protein] + NADH + H(+). Functionally, the branched-chain alpha-keto dehydrogenase complex catalyzes the overall conversion of alpha-keto acids to acyl-CoA and CO(2). It contains multiple copies of 3 enzymatic components: branched-chain alpha-keto acid decarboxylase (E1), lipoamide acyltransferase (E2) and lipoamide dehydrogenase (E3). This Chlamydia muridarum (strain MoPn / Nigg) protein is Dihydrolipoyl dehydrogenase (lpdA).